Here is a 467-residue protein sequence, read N- to C-terminus: Serine/threonine-protein phosphatase 2A 56 kDa regulatory subunit epsilon isoform (467 aa).

The interval Met-1–Gln-39 is disordered. The residue at position 2 (Ser-2) is an N-acetylserine. Position 7 is a phosphothreonine (Thr-7). Basic residues predominate over residues Lys-20–Arg-29. Residues Ser-30, Ser-32, and Ser-34 each carry the phosphoserine modification. The segment covering Ser-30–Gln-39 has biased composition (low complexity).

The protein belongs to the phosphatase 2A regulatory subunit B56 family. In terms of assembly, PP2A consists of a common heterodimeric core enzyme, composed of a 36 kDa catalytic subunit (subunit C) and a 65 kDa constant regulatory subunit (PR65 or subunit A), that associates with a variety of regulatory subunits. Proteins that associate with the core dimer include three families of regulatory subunits B (the R2/B/PR55/B55, R3/B''/PR72/PR130/PR59 and R5/B'/B56 families), the 48 kDa variable regulatory subunit, viral proteins, and cell signaling molecules. Interacts with SGO1. Found in a complex with at least ARL2, PPP2CB; PPP2R1A, PPP2R2A, PPP2R5E and TBCD.

Its subcellular location is the cytoplasm. The B regulatory subunit might modulate substrate selectivity and catalytic activity, and might also direct the localization of the catalytic enzyme to a particular subcellular compartment. Interacts with cyclin G in vitro. This chain is Serine/threonine-protein phosphatase 2A 56 kDa regulatory subunit epsilon isoform (Ppp2r5e), found in Mus musculus (Mouse).